Here is a 292-residue protein sequence, read N- to C-terminus: Cyclin-dependent kinase A-2 (292 aa).

The region spanning 4 to 286 (YEKVEKIGEG…ARAALEHEYF (283 aa)) is the Protein kinase domain. ATP contacts are provided by residues 10-18 (IGEGTYGVV) and K33. T14 is subject to Phosphothreonine. A Phosphotyrosine modification is found at Y15. Catalysis depends on D126, which acts as the Proton acceptor. T160 carries the post-translational modification Phosphothreonine.

The protein belongs to the protein kinase superfamily. CMGC Ser/Thr protein kinase family. CDC2/CDKX subfamily. As to expression, expressed in the dividing region of the root apex and in differentiated cells such as those in the sclerenchyma, pericycle and parenchyma of the central cylinder. Expressed in the intercalary meristem and the elongation zone of internodes.

It catalyses the reaction L-seryl-[protein] + ATP = O-phospho-L-seryl-[protein] + ADP + H(+). The catalysed reaction is L-threonyl-[protein] + ATP = O-phospho-L-threonyl-[protein] + ADP + H(+). The enzyme catalyses [DNA-directed RNA polymerase] + ATP = phospho-[DNA-directed RNA polymerase] + ADP + H(+). This chain is Cyclin-dependent kinase A-2 (CDKA-2), found in Oryza sativa subsp. japonica (Rice).